Reading from the N-terminus, the 319-residue chain is Acetyl-coenzyme A carboxylase carboxyl transferase subunit alpha (319 aa).

A CoA carboxyltransferase C-terminal domain is found at 35 to 296 (DLDKEIEQLE…KANLLRQLED (262 aa)).

Belongs to the AccA family. Acetyl-CoA carboxylase is a heterohexamer composed of biotin carboxyl carrier protein (AccB), biotin carboxylase (AccC) and two subunits each of ACCase subunit alpha (AccA) and ACCase subunit beta (AccD).

The protein resides in the cytoplasm. The enzyme catalyses N(6)-carboxybiotinyl-L-lysyl-[protein] + acetyl-CoA = N(6)-biotinyl-L-lysyl-[protein] + malonyl-CoA. The protein operates within lipid metabolism; malonyl-CoA biosynthesis; malonyl-CoA from acetyl-CoA: step 1/1. Functionally, component of the acetyl coenzyme A carboxylase (ACC) complex. First, biotin carboxylase catalyzes the carboxylation of biotin on its carrier protein (BCCP) and then the CO(2) group is transferred by the carboxyltransferase to acetyl-CoA to form malonyl-CoA. The sequence is that of Acetyl-coenzyme A carboxylase carboxyl transferase subunit alpha from Vibrio campbellii (strain ATCC BAA-1116).